Here is a 426-residue protein sequence, read N- to C-terminus: Serine--tRNA ligase (426 aa).

The segment at lysine 36 to glutamate 66 is disordered. The span at aspartate 46–serine 55 shows a compositional bias: polar residues. L-serine is bound at residue threonine 233–glutamate 235. Position 264–266 (arginine 264–glutamate 266) interacts with ATP. Glutamate 287 is an L-serine binding site. Residue glutamate 351–serine 354 coordinates ATP. Serine 387 contacts L-serine.

This sequence belongs to the class-II aminoacyl-tRNA synthetase family. Type-1 seryl-tRNA synthetase subfamily. In terms of assembly, homodimer. The tRNA molecule binds across the dimer.

Its subcellular location is the cytoplasm. It carries out the reaction tRNA(Ser) + L-serine + ATP = L-seryl-tRNA(Ser) + AMP + diphosphate + H(+). The catalysed reaction is tRNA(Sec) + L-serine + ATP = L-seryl-tRNA(Sec) + AMP + diphosphate + H(+). The protein operates within aminoacyl-tRNA biosynthesis; selenocysteinyl-tRNA(Sec) biosynthesis; L-seryl-tRNA(Sec) from L-serine and tRNA(Sec): step 1/1. In terms of biological role, catalyzes the attachment of serine to tRNA(Ser). Is also able to aminoacylate tRNA(Sec) with serine, to form the misacylated tRNA L-seryl-tRNA(Sec), which will be further converted into selenocysteinyl-tRNA(Sec). This chain is Serine--tRNA ligase, found in Francisella tularensis subsp. holarctica (strain FTNF002-00 / FTA).